The sequence spans 436 residues: Phosphomethylpyrimidine synthase (436 aa).

Substrate is bound by residues N68, M97, Y126, H166, 188–190 (SRG), 229–232 (DGFR), and E268. H272 contributes to the Zn(2+) binding site. Y295 serves as a coordination point for substrate. Zn(2+) is bound at residue H336. [4Fe-4S] cluster contacts are provided by C412, C415, and C419.

It belongs to the ThiC family. Homodimer. It depends on [4Fe-4S] cluster as a cofactor.

It catalyses the reaction 5-amino-1-(5-phospho-beta-D-ribosyl)imidazole + S-adenosyl-L-methionine = 4-amino-2-methyl-5-(phosphooxymethyl)pyrimidine + CO + 5'-deoxyadenosine + formate + L-methionine + 3 H(+). It functions in the pathway cofactor biosynthesis; thiamine diphosphate biosynthesis. In terms of biological role, catalyzes the synthesis of the hydroxymethylpyrimidine phosphate (HMP-P) moiety of thiamine from aminoimidazole ribotide (AIR) in a radical S-adenosyl-L-methionine (SAM)-dependent reaction. This chain is Phosphomethylpyrimidine synthase, found in Geobacter metallireducens (strain ATCC 53774 / DSM 7210 / GS-15).